A 415-amino-acid polypeptide reads, in one-letter code: Histidine--tRNA ligase (415 aa).

The protein belongs to the class-II aminoacyl-tRNA synthetase family. Homodimer.

The protein resides in the cytoplasm. The catalysed reaction is tRNA(His) + L-histidine + ATP = L-histidyl-tRNA(His) + AMP + diphosphate + H(+). This Clostridium perfringens (strain SM101 / Type A) protein is Histidine--tRNA ligase.